The primary structure comprises 212 residues: MSNFKNIIPKRTYLERGQAKHRLHLGELEKKVDYGKRREIYKKKKKIENVLKEKIMTKNPDEFHTGMVHSRVTEDNVLVREEKVLKKEVQLKNKRQELKEQTNDLYNKLKKINKRLSNYQMNIPLRYVFNNSHELYNENEIYTLKAENKKLKKRGDLIQKKYNGLINMKKNLLDQIRKLDNKYITTYHKVDGYNIVTDKGKTPYRLYQPRLK.

It belongs to the UTP11 family. In terms of assembly, component of the ribosomal small subunit (SSU) processome.

The protein resides in the nucleus. The protein localises to the nucleolus. Its function is as follows. Involved in nucleolar processing of pre-18S ribosomal RNA. The chain is Probable U3 small nucleolar RNA-associated protein 11 from Plasmodium falciparum (isolate 3D7).